Reading from the N-terminus, the 213-residue chain is PRA1 family protein B2 (213 aa).

A disordered region spans residues 1 to 21 (MSSSPAILPVTNQQAATQSQP). 5 helical membrane-spanning segments follow: residues 75–94 (LAYFKVNYSAIVSLVLAFSL), 98–117 (PFSLLVLLSLLGSWMFLYLF), 137–157 (LLGLVLTTIVVVFMTSVGSLL), 161–181 (LTIGIAIVCLHGAFRVPDDLF), and 190–210 (AGLLSFIGNSAATSAAASVVA).

It belongs to the PRA1 family. In terms of assembly, interacts with PRA1B1, PRA1B3, PRA1B4, PRA1B5, PRA1B6 and PRA1E.

The protein resides in the endosome membrane. Functionally, may be involved in both secretory and endocytic intracellular trafficking in the endosomal/prevacuolar compartments. This is PRA1 family protein B2 (PRA1B2) from Arabidopsis thaliana (Mouse-ear cress).